The chain runs to 158 residues: S-ribosylhomocysteine lyase (158 aa).

Fe cation-binding residues include His57, His61, and Cys125.

This sequence belongs to the LuxS family. In terms of assembly, homodimer. The cofactor is Fe cation.

It carries out the reaction S-(5-deoxy-D-ribos-5-yl)-L-homocysteine = (S)-4,5-dihydroxypentane-2,3-dione + L-homocysteine. Functionally, involved in the synthesis of autoinducer 2 (AI-2) which is secreted by bacteria and is used to communicate both the cell density and the metabolic potential of the environment. The regulation of gene expression in response to changes in cell density is called quorum sensing. Catalyzes the transformation of S-ribosylhomocysteine (RHC) to homocysteine (HC) and 4,5-dihydroxy-2,3-pentadione (DPD). The chain is S-ribosylhomocysteine lyase from Deinococcus radiodurans (strain ATCC 13939 / DSM 20539 / JCM 16871 / CCUG 27074 / LMG 4051 / NBRC 15346 / NCIMB 9279 / VKM B-1422 / R1).